The following is a 408-amino-acid chain: D-inositol 3-phosphate glycosyltransferase (408 aa).

1D-myo-inositol 3-phosphate is bound at residue histidine 7. UDP-N-acetyl-alpha-D-glucosamine-binding positions include 13-14 and glycine 21; that span reads QP. 1D-myo-inositol 3-phosphate is bound by residues 18-23, lysine 76, tyrosine 109, threonine 133, and arginine 153; that span reads DAGGMN. Arginine 227, lysine 232, and valine 288 together coordinate UDP-N-acetyl-alpha-D-glucosamine. Positions 297, 298, and 300 each coordinate Mg(2+). 2 residues coordinate UDP-N-acetyl-alpha-D-glucosamine: glutamate 310 and glutamate 318. Threonine 324 lines the Mg(2+) pocket.

This sequence belongs to the glycosyltransferase group 1 family. MshA subfamily. Homodimer.

It catalyses the reaction 1D-myo-inositol 3-phosphate + UDP-N-acetyl-alpha-D-glucosamine = 1D-myo-inositol 2-acetamido-2-deoxy-alpha-D-glucopyranoside 3-phosphate + UDP + H(+). Its function is as follows. Catalyzes the transfer of a N-acetyl-glucosamine moiety to 1D-myo-inositol 3-phosphate to produce 1D-myo-inositol 2-acetamido-2-deoxy-glucopyranoside 3-phosphate in the mycothiol biosynthesis pathway. This Paenarthrobacter aurescens (strain TC1) protein is D-inositol 3-phosphate glycosyltransferase.